A 647-amino-acid polypeptide reads, in one-letter code: Threonine--tRNA ligase (647 aa).

The region spanning 1-61 (MINITFPDGA…TEDGSIEIVT (61 aa)) is the TGS domain. A catalytic region spans residues 242 to 540 (DHRKLGKELD…LIENYKGAFP (299 aa)). Zn(2+) is bound by residues Cys336, His387, and His517.

This sequence belongs to the class-II aminoacyl-tRNA synthetase family. In terms of assembly, homodimer. It depends on Zn(2+) as a cofactor.

It localises to the cytoplasm. It catalyses the reaction tRNA(Thr) + L-threonine + ATP = L-threonyl-tRNA(Thr) + AMP + diphosphate + H(+). In terms of biological role, catalyzes the attachment of threonine to tRNA(Thr) in a two-step reaction: L-threonine is first activated by ATP to form Thr-AMP and then transferred to the acceptor end of tRNA(Thr). Also edits incorrectly charged L-seryl-tRNA(Thr). The polypeptide is Threonine--tRNA ligase (Streptococcus pneumoniae (strain 70585)).